The chain runs to 437 residues: Methionine aminopeptidase 2 (437 aa).

Residues 1–90 form a disordered region; sequence MAAQAAPAEE…LFPNNQYPKG (90 aa). A compositionally biased stretch (basic and acidic residues) spans 10-20; it reads ELSKLSVDETK. Residues 31–42 show a composition bias toward acidic residues; it reads SDAESGDEEAEE. Basic residues predominate over residues 52–66; sequence AKKKKKRKPKKKKKA. His-190 lines the substrate pocket. The a divalent metal cation site is built by Asp-210, Asp-221, and His-290. A substrate-binding site is contributed by His-298. A divalent metal cation-binding residues include Glu-323 and Glu-418.

This sequence belongs to the peptidase M24A family. Methionine aminopeptidase eukaryotic type 2 subfamily. The cofactor is Co(2+). Zn(2+) serves as cofactor. It depends on Mn(2+) as a cofactor. Fe(2+) is required as a cofactor.

Its subcellular location is the cytoplasm. It carries out the reaction Release of N-terminal amino acids, preferentially methionine, from peptides and arylamides.. In terms of biological role, cotranslationally removes the N-terminal methionine from nascent proteins. The N-terminal methionine is often cleaved when the second residue in the primary sequence is small and uncharged (Met-Ala-, Cys, Gly, Pro, Ser, Thr, or Val). This is Methionine aminopeptidase 2 from Neurospora crassa (strain ATCC 24698 / 74-OR23-1A / CBS 708.71 / DSM 1257 / FGSC 987).